The primary structure comprises 253 residues: Maleate isomerase (253 aa).

Substrate contacts are provided by residues Asn-14, 80 to 82 (CLV), Tyr-137, and Asn-167. Catalysis depends on Cys-80, which acts as the Nucleophile. Cys-80 bears the S-(2-succinyl)cysteine mark. Residue Cys-198 is the Proton donor of the active site. Position 199–200 (199–200 (VQ)) interacts with substrate.

The protein belongs to the maleate isomerase family. As to quaternary structure, homodimer.

The enzyme catalyses maleate = fumarate. Catalyzes cis-trans isomerization of the C2-C3 double bond in maleate to yield fumarate. This chain is Maleate isomerase, found in Alcaligenes faecalis.